Here is a 1178-residue protein sequence, read N- to C-terminus: Phosphate system positive regulatory protein PHO81 (1178 aa).

In terms of domain architecture, SPX spans 1 to 169; sequence MKFGKYLEAR…QSHDKDFYLA (169 aa). Residues 210-250 form a disordered region; that stretch reads QSSTFTNDDDDDNNTSNNNKHNNNNNNNNNNNNNNNNNNIL. Residues 223 to 250 are compositionally biased toward low complexity; sequence NTSNNNKHNNNNNNNNNNNNNNNNNNIL. ANK repeat units lie at residues 423–452, 458–487, 506–535, 556–586, 591–620, and 624–653; these read HSRV…LEDV, DSKT…ANAS, VQFD…KQNA, TGLC…DPNE, NKWT…RLDI, and NGHS…NLPS. The region spanning 871–1178 is the GP-PDE domain; sequence IINYEPYWKS…ELLFENNIDM (308 aa). Serine 956 carries the phosphoserine modification.

Associates specifically with the PHO80-PHO85 and PCL7-PHO85 cyclin-CDK complexes, and much of this interaction is mediated through the PHO80 and PCL7 cyclin subunits. Interacts with the transcription factor PHO4. In terms of processing, phosphorylated by the cyclin-CDK PHO80-PHO85. Phosphorylation mediates the formation of a stable interaction with the cyclin-CDK and is required for function as an active inhibitor of the complex under phosphate starvation conditions.

The protein localises to the cytoplasm. It localises to the nucleus. Its function is as follows. Inhibits the kinase activity of the cyclin-CDKs PHO80-PHO85 and PCL7-PHO85 under low-phosphate conditions. The polypeptide is Phosphate system positive regulatory protein PHO81 (PHO81) (Saccharomyces cerevisiae (strain ATCC 204508 / S288c) (Baker's yeast)).